Here is a 151-residue protein sequence, read N- to C-terminus: tRNA-specific adenosine deaminase (151 aa).

The region spanning Asn4 to Leu122 is the CMP/dCMP-type deaminase domain. His55 lines the Zn(2+) pocket. Glu57 serves as the catalytic Proton donor. Zn(2+)-binding residues include Cys85 and Cys88.

This sequence belongs to the cytidine and deoxycytidylate deaminase family. As to quaternary structure, homodimer. Zn(2+) is required as a cofactor.

It carries out the reaction adenosine(34) in tRNA + H2O + H(+) = inosine(34) in tRNA + NH4(+). Functionally, catalyzes the deamination of adenosine to inosine at the wobble position 34 of tRNA(Arg2). This chain is tRNA-specific adenosine deaminase, found in Buchnera aphidicola subsp. Schizaphis graminum (strain Sg).